A 296-amino-acid polypeptide reads, in one-letter code: Dof zinc finger protein DOF3.7 (296 aa).

The segment at 41–69 is disordered; that stretch reads NTRPNATASNGGSGGNTNNTATMETRKAR. Residues 45-62 show a composition bias toward low complexity; sequence NATASNGGSGGNTNNTAT. The segment at 74-128 adopts a Dof-type zinc-finger fold; the sequence is VNCPRCNSTNTKFCYYNNYSLTQPRYFCKGCRRYWTEGGSLRNVPVGGSSRKNKR. Zn(2+) contacts are provided by C76, C79, C101, and C104. A disordered region spans residues 115 to 146; it reads RNVPVGGSSRKNKRSSTPLASPSNPKLPDLNP. Residues 129–138 are compositionally biased toward polar residues; that stretch reads SSTPLASPSN.

In terms of tissue distribution, expressed in the phloem of the mother plant, including in roots, stem, leaves and flowers, but not present in the seed and embryo. In maturing siliques, found all through the funiculus connecting the placenta to the ovule, but not in the ovule.

It is found in the nucleus. Its function is as follows. Transcription factor specifically involved in the maternal control of seed germination. Regulates transcription by binding to a 5'-AA[AG]G-3' consensus core sequence. May ensure the inactivity of a component that would be activated to trigger germination as a consequence of red light perception. The polypeptide is Dof zinc finger protein DOF3.7 (DOF3.7) (Arabidopsis thaliana (Mouse-ear cress)).